Reading from the N-terminus, the 418-residue chain is Serpin H1 (418 aa).

The first 18 residues, 1–18 (MRALLLISTICLLARALA), serve as a signal peptide directing secretion. The residue at position 94 (K94) is an N6-succinyllysine. N-linked (GlcNAc...) asparagine glycosylation is found at N120 and N125. S141 bears the Phosphoserine mark. K207 is subject to N6-acetyllysine. Position 296 is an N6-succinyllysine (K296). K319 carries the N6-acetyllysine modification. The Prevents secretion from ER signature appears at 415–418 (RDEL).

It belongs to the serpin family.

The protein localises to the endoplasmic reticulum lumen. Its function is as follows. Binds specifically to collagen. Could be involved as a chaperone in the biosynthetic pathway of collagen. This chain is Serpin H1 (SERPINH1), found in Bos taurus (Bovine).